The sequence spans 361 residues: Chitinase-3-like protein 1 (361 aa).

The GH18 domain occupies 1–361 (YKLICYYTSW…SAVKDVLAEV (361 aa)). A disulfide bridge connects residues Cys5 and Cys30. Asn39 is a glycosylation site (N-linked (GlcNAc...) asparagine). Residues 49–50 (EW), 76–79 (GGWN), Tyr120, 183–186 (LTYD), and Arg241 each bind chitin. Cys278 and Cys342 are oxidised to a cystine. The tract at residues 302 to 316 (QWVAYDDQESVKNKA) is important for AKT1 activation and IL8 production. A chitin-binding site is contributed by Trp330. The N-linked (GlcNAc...) asparagine glycan is linked to Asn345.

It belongs to the glycosyl hydrolase 18 family. Monomer. In terms of tissue distribution, detected in mammary gland.

The protein resides in the secreted. Its subcellular location is the extracellular space. The protein localises to the cytoplasm. It localises to the perinuclear region. It is found in the endoplasmic reticulum. Its function is as follows. Carbohydrate-binding lectin with a preference for chitin. Has no chitinase activity. May play a role in tissue remodeling and in the capacity of cells to respond to and cope with changes in their environment. Plays a role in T-helper cell type 2 (Th2) inflammatory response and IL-13-induced inflammation, regulating allergen sensitization, inflammatory cell apoptosis, dendritic cell accumulation and M2 macrophage differentiation. Facilitates invasion of pathogenic enteric bacteria into colonic mucosa and lymphoid organs. Mediates activation of AKT1 signaling pathway and subsequent IL8 production in colonic epithelial cells. Regulates antibacterial responses in lung by contributing to macrophage bacterial killing, controlling bacterial dissemination and augmenting host tolerance. Also regulates hyperoxia-induced injury, inflammation and epithelial apoptosis in lung. In Ovis aries (Sheep), this protein is Chitinase-3-like protein 1 (CHI3L1).